Here is a 493-residue protein sequence, read N- to C-terminus: Cytochrome P450 Tp9025 (493 aa).

The chain crosses the membrane as a helical; Signal-anchor for type II membrane protein span at residues Met-1–Phe-21. N-linked (GlcNAc...) asparagine glycans are attached at residues Asn-209 and Asn-411. Residue Cys-433 coordinates heme.

It belongs to the cytochrome P450 family. Requires heme as cofactor.

Its subcellular location is the membrane. It participates in secondary metabolite biosynthesis; terpenoid biosynthesis. Its function is as follows. Probably involved in the biosynthesis of germacrene-derived sesquiterpene lactones. This is Cytochrome P450 Tp9025 from Tanacetum parthenium (Feverfew).